The primary structure comprises 178 residues: Deoxyuridine 5'-triphosphate nucleotidohydrolase (178 aa).

It belongs to the dUTPase family. The cofactor is Mg(2+).

The catalysed reaction is dUTP + H2O = dUMP + diphosphate + H(+). It participates in pyrimidine metabolism; dUMP biosynthesis; dUMP from dCTP (dUTP route): step 2/2. In terms of biological role, this enzyme is involved in nucleotide metabolism: it produces dUMP, the immediate precursor of thymidine nucleotides and it decreases the intracellular concentration of dUTP so that uracil cannot be incorporated into DNA. In Fowl adenovirus A serotype 1 (strain CELO / Phelps) (FAdV-1), this protein is Deoxyuridine 5'-triphosphate nucleotidohydrolase.